Reading from the N-terminus, the 1021-residue chain is MPIFRFTALAMTLGLLSAPYNAMAATSNPAFDPKNLMQSEIYHFAQNNPLADFSSDKNSILTLSDKRSIMGNQSLLWKWKGGSSFTLHKKLIVPTDKEASKAWGRSSTPVFSFWLYNEKPIDGYLTIDFGEKLISTSEAQAGFKVKLDFTGWRAVGVSLNNDLENREMTLNATNTSSDGTQDSIGRSLGAKVDSIRFKAPSNVSQGEIYIDRIMFSVDDARYQWSDYQVKTRLSEPEIQFHNVKPQLPVTPENLAAIDLIRQRLINEFVGGEKETNLALEENISKLKSDFDALNIHTLANGGTQGRHLITDKQIIIYQPENLNSQDKQLFDNYVILGNYTTLMFNISRAYVLEKDPTQKAQLKQMYLLMTKHLLDQGFVKGSALVTTHHWGYSSRWWYISTLLMSDALKEANLQTQVYDSLLWYSREFKSSFDMKVSADSSDLDYFNTLSRQHLALLLLEPDDQKRINLVNTFSHYITGALTQVPPGGKDGLRPDGTAWRHEGNYPGYSFPAFKNASQLIYLLRDTPFSVGESGWNNLKKAMVSAWIYSNPEVGLPLAGRHPFNSPSLKSVAQGYYWLAMSAKSSPDKTLASIYLAISDKTQNESTAIFGETITPASLPQGFYAFNGGAFGIHRWQDKMVTLKAYNTNVWSSEIYNKDNRYGRYQSHGVAQIVSNGSQLSQGYQQEGWDWNRMQGATTIHLPLKDLDSPKPHTLMQRGERGFSGTSSLEGQYGMMAFDLIYPANLERFDPNFTAKKSVLAADNHLIFIGSNINSSDKNKNVETTLFQHAITPTLNTLWINGQKIENMPYQTTLQQGDWLIDSNGNGYLITQAEKVNVSRQHQVSAENKNRQPTEGNFSSAWIDHSTRPKDASYEYMVFLDATPEKMGEMAQKFRENNGLYQVLRKDKDVHIILDKLSNVTGYAFYQPASIEDKWIKKVNKPAIVMTHRQKDTLIVSAVTPDLNMTRQKAATPVTINVTINGKWQSADKNSEVKYQVSGDNTELTFTSYFGIPQEIKLSPLP.

The first 24 residues, Met-1 to Ala-24, serve as a signal peptide directing secretion. Residues His-43, Met-70, Gln-73, and Asp-211 each contribute to the Na(+) site. Catalysis depends on His-501, which acts as the Proton acceptor. The Proton donor role is filled by Tyr-508.

Belongs to the polysaccharide lyase 8 family. In terms of assembly, monomer.

Its subcellular location is the periplasm. The catalysed reaction is Endolytic cleavage of (1-&gt;4)-beta-galactosaminic bonds between N-acetylgalactosamine and either D-glucuronic acid or L-iduronic acid to produce a mixture of Delta(4)-unsaturated oligosaccharides of different sizes that are ultimately degraded to Delta(4)-unsaturated tetra- and disaccharides.. With respect to regulation, is inhibited by Zn(2+), Ni(2+), Fe(2+) and Cu(2+). Endolytic, broad-specificity glycosaminoglycan lyase, which degrades the polysaccharides chondroitin, chondroitin-4-sulfate, chondroitin-6-sulfate, dermatan sulfate and to a lesser extent hyaluronan, by beta-elimination of 1,4-hexosaminidic bond to unsaturated tetrasaccharides and disaccharides. Is not active against keratan sulfate, heparan sulfate, and heparin. Is able to promote functional recovery in the injured central nervous system (CNS), via its role in the disruption of the normal organization of the extracellular matrix (ECM). The protein is Chondroitin sulfate ABC endolyase of Proteus vulgaris.